A 164-amino-acid chain; its full sequence is Shikimate kinase (164 aa).

11–16 is a binding site for ATP; the sequence is GSGKST. S15 contacts Mg(2+). The substrate site is built by D33, R57, and G79. Residue R117 participates in ATP binding. R134 serves as a coordination point for substrate.

Belongs to the shikimate kinase family. In terms of assembly, monomer. The cofactor is Mg(2+).

The protein localises to the cytoplasm. It catalyses the reaction shikimate + ATP = 3-phosphoshikimate + ADP + H(+). Its pathway is metabolic intermediate biosynthesis; chorismate biosynthesis; chorismate from D-erythrose 4-phosphate and phosphoenolpyruvate: step 5/7. In terms of biological role, catalyzes the specific phosphorylation of the 3-hydroxyl group of shikimic acid using ATP as a cosubstrate. The protein is Shikimate kinase of Persephonella marina (strain DSM 14350 / EX-H1).